We begin with the raw amino-acid sequence, 593 residues long: La-related protein 7 (593 aa).

Positions 1–11 (MTAIETDTPSN) are enriched in polar residues. The segment at 1-28 (MTAIETDTPSNKVKEDESTDLRKDREKK) is disordered. Basic and acidic residues predominate over residues 12–24 (KVKEDESTDLRKD). The region spanning 30–121 (RSRVKQLLAD…RRRFPLGEKP (92 aa)) is the HTH La-type RNA-binding domain. The RRM domain maps to 127-205 (RTVYVELLPK…PRKAGMFPKT (79 aa)). The interval 191-363 (PPEEAPRKAG…STEEEKDAVD (173 aa)) is disordered. The span at 231 to 240 (KKKKKKKSKA) shows a compositional bias: basic residues. Acidic residues predominate over residues 248–259 (AEEDTKEQDMDI). 3 stretches are compositionally biased toward basic and acidic residues: residues 295–307 (ERAE…EKVR), 314–340 (SSSE…DEKP), and 348–363 (QECK…DAVD). The 114-residue stretch at 461-574 (QFVCGVIGKI…TEKLIAKAEK (114 aa)) folds into the xRRM domain.

Belongs to the LARP7 family. Core component of the 7SK RNP complex. Associates with box C/D small nucleolar ribonucleoprotein (snoRNP) complexes.

The protein localises to the nucleus. Its subcellular location is the nucleoplasm. RNA-binding protein that specifically binds distinct small nuclear RNA (snRNAs) and regulates their processing and function. Specifically binds the 7SK snRNA (7SK RNA) and acts as a core component of the 7SK ribonucleoprotein (RNP) complex, thereby acting as a negative regulator of transcription elongation by RNA polymerase II. The 7SK RNP complex sequesters the positive transcription elongation factor b (P-TEFb) in a large inactive 7SK RNP complex preventing RNA polymerase II phosphorylation and subsequent transcriptional elongation. The 7SK RNP complex also promotes snRNA gene transcription by RNA polymerase II via interaction with the little elongation complex (LEC). LARP7 specifically binds to the highly conserved 3'-terminal U-rich stretch of 7SK RNA; on stimulation, remains associated with 7SK RNA, whereas P-TEFb is released from the complex. LARP7 also acts as a regulator of mRNA splicing fidelity by promoting U6 snRNA processing. Specifically binds U6 snRNAs and associates with a subset of box C/D RNP complexes: promotes U6 snRNA 2'-O-methylation by facilitating U6 snRNA loading into box C/D RNP complexes. U6 snRNA 2'-O-methylation is required for mRNA splicing fidelity. This chain is La-related protein 7, found in Xenopus tropicalis (Western clawed frog).